The following is a 600-amino-acid chain: Prostaglandin G/H synthase 1 (600 aa).

Residues 1–24 (MSRQSISLRFPLLLLLLSPSPVFS) form the signal peptide. The 39-residue stretch at 32 to 70 (PVNPCCYYPCQHQGICVRFGLDRYQCDCTRTGYSGPNCT) folds into the EGF-like domain. 4 disulfides stabilise this stretch: cysteine 36–cysteine 47, cysteine 37–cysteine 159, cysteine 41–cysteine 57, and cysteine 59–cysteine 69. Asparagine 68 is a glycosylation site (N-linked (GlcNAc...) asparagine). The next 4 helical transmembrane spans lie at 74 to 82 (IWTWLRTTL), 86 to 92 (PSFIHFL), 97 to 105 (RWLWDFVNA), and 108 to 122 (IRDTLMRLVLTVRSN). An N-linked (GlcNAc...) asparagine glycan is attached at asparagine 144. Residue histidine 207 is the Proton acceptor of the active site. Catalysis depends on tyrosine 385, which acts as the For cyclooxygenase activity. Residue histidine 388 participates in heme b binding. Asparagine 410 is a glycosylation site (N-linked (GlcNAc...) asparagine). Cysteines 569 and 575 form a disulfide.

The protein belongs to the prostaglandin G/H synthase family. In terms of assembly, homodimer. It depends on heme b as a cofactor.

It localises to the endoplasmic reticulum membrane. The protein localises to the microsome membrane. The enzyme catalyses (5Z,8Z,11Z,14Z)-eicosatetraenoate + AH2 + 2 O2 = prostaglandin H2 + A + H2O. The catalysed reaction is (5Z,8Z,11Z,14Z)-eicosatetraenoate + 2 O2 = prostaglandin G2. It carries out the reaction prostaglandin G2 + AH2 = prostaglandin H2 + A + H2O. It catalyses the reaction (9Z,12Z)-octadecadienoate + AH2 + O2 = (9R)-hydroxy-(10E,12Z)-octadecadienoate + A + H2O. The enzyme catalyses (9Z,12Z)-octadecadienoate + AH2 + O2 = (9S)-hydroxy-(10E,12Z)-octadecadienoate + A + H2O. The catalysed reaction is (9Z,12Z)-octadecadienoate + AH2 + O2 = (13S)-hydroxy-(9Z,11E)-octadecadienoate + A + H2O. It carries out the reaction (9Z,12Z)-octadecadienoate + AH2 + O2 = (13R)-hydroxy-(9Z,11E)-octadecadienoate + A + H2O. The protein operates within lipid metabolism; prostaglandin biosynthesis. Its activity is regulated as follows. The cyclooxygenase activity is inhibited by nonsteroidal anti-inflammatory drugs (NSAIDs) including ibuprofen, flurbiprofen, ketoprofen, naproxen, flurbiprofen, anirolac, fenclofenac and diclofenac. Dual cyclooxygenase and peroxidase that plays an important role in the biosynthesis pathway of prostanoids, a class of C20 oxylipins mainly derived from arachidonate ((5Z,8Z,11Z,14Z)-eicosatetraenoate, AA, C20:4(n-6)), with a particular role in the inflammatory response. The cyclooxygenase activity oxygenates AA to the hydroperoxy endoperoxide prostaglandin G2 (PGG2), and the peroxidase activity reduces PGG2 to the hydroxy endoperoxide prostaglandin H2 (PGH2), the precursor of all 2-series prostaglandins and thromboxanes. This complex transformation is initiated by abstraction of hydrogen at carbon 13 (with S-stereochemistry), followed by insertion of molecular O2 to form the endoperoxide bridge between carbon 9 and 11 that defines prostaglandins. The insertion of a second molecule of O2 (bis-oxygenase activity) yields a hydroperoxy group in PGG2 that is then reduced to PGH2 by two electrons. Involved in the constitutive production of prostanoids in particular in the stomach and platelets. In gastric epithelial cells, it is a key step in the generation of prostaglandins, such as prostaglandin E2 (PGE2), which plays an important role in cytoprotection. In platelets, it is involved in the generation of thromboxane A2 (TXA2), which promotes platelet activation and aggregation, vasoconstriction and proliferation of vascular smooth muscle cells. Can also use linoleate (LA, (9Z,12Z)-octadecadienoate, C18:2(n-6)) as substrate and produce hydroxyoctadecadienoates (HODEs) in a regio- and stereospecific manner, being (9R)-HODE ((9R)-hydroxy-(10E,12Z)-octadecadienoate) and (13S)-HODE ((13S)-hydroxy-(9Z,11E)-octadecadienoate) its major products. The polypeptide is Prostaglandin G/H synthase 1 (PTGS1) (Ovis aries (Sheep)).